Here is a 311-residue protein sequence, read N- to C-terminus: Probable cell division protein WhiA (311 aa).

The segment at residues Ser274–Glu308 is a DNA-binding region (H-T-H motif).

It belongs to the WhiA family.

Involved in cell division and chromosome segregation. In Enterococcus faecalis (strain ATCC 700802 / V583), this protein is Probable cell division protein WhiA.